The chain runs to 537 residues: Fucosyltransferase 6 (537 aa).

Topologically, residues 1–20 (MYHIFQISSEVFRAFGLKMK) are cytoplasmic. The chain crosses the membrane as a helical; Signal-anchor for type II membrane protein span at residues 21 to 41 (ILLTLVFSGLLIWSVVLVSFS). The Lumenal segment spans residues 42–537 (NDFNNQLLVA…NDGLKLFDEL (496 aa)). Residues Asn-54, Asn-231, and Asn-378 are each glycosylated (N-linked (GlcNAc...) asparagine).

It belongs to the glycosyltransferase 37 family. As to expression, expressed in roots and flowers.

The protein localises to the golgi apparatus. Its subcellular location is the golgi stack membrane. It functions in the pathway protein modification; protein glycosylation. Its function is as follows. May be involved in cell wall biosynthesis. May act as a fucosyltransferase. The polypeptide is Fucosyltransferase 6 (FUT6) (Arabidopsis thaliana (Mouse-ear cress)).